A 336-amino-acid polypeptide reads, in one-letter code: tRNA N6-adenosine threonylcarbamoyltransferase (336 aa).

H114 and H118 together coordinate Fe cation. Residues 136–140, D169, G182, D186, and N275 each bind substrate; that span reads LVSGG. Residue D301 coordinates Fe cation.

The protein belongs to the KAE1 / TsaD family. It depends on Fe(2+) as a cofactor.

It is found in the cytoplasm. It carries out the reaction L-threonylcarbamoyladenylate + adenosine(37) in tRNA = N(6)-L-threonylcarbamoyladenosine(37) in tRNA + AMP + H(+). Its function is as follows. Required for the formation of a threonylcarbamoyl group on adenosine at position 37 (t(6)A37) in tRNAs that read codons beginning with adenine. Is involved in the transfer of the threonylcarbamoyl moiety of threonylcarbamoyl-AMP (TC-AMP) to the N6 group of A37, together with TsaE and TsaB. TsaD likely plays a direct catalytic role in this reaction. The protein is tRNA N6-adenosine threonylcarbamoyltransferase of Streptococcus pneumoniae (strain JJA).